Here is a 2876-residue protein sequence, read N- to C-terminus: Nipped-B-like protein B (2876 aa).

2 stretches are compositionally biased toward polar residues: residues 124 to 142 (PQNSMHGSPASNYQQTTIT) and 149 to 167 (YVQTQAGSGSRYMPQQNSP). Disordered stretches follow at residues 124–197 (PQNS…PIQQ), 246–367 (NDEG…SDAE), 439–494 (RESA…AGNK), and 525–1017 (EGPV…FPNY). Pro residues predominate over residues 276-290 (GPRPPLILQSPPPYT). Positions 439-457 (RESAIERERCSKEVQDKDK) are enriched in basic and acidic residues. Residues 471 to 480 (PGAAGTAGAS) show a composition bias toward low complexity. Positions 481–490 (GTPGVGGGCN) are enriched in gly residues. Composition is skewed to basic and acidic residues over residues 556–577 (SKTDGEVQRTVDGRPEVIKQRV), 586–955 (VDGR…EQRS), and 962–1005 (VKQE…HKPQ). A PxVxL motif motif is present at residues 1068-1081 (NKGAKPVVVLKKLS). Disordered stretches follow at residues 1088-1229 (MISN…EPKL) and 1724-1747 (TEKAMKSQRDDDSSDGPHHAKDVE). Positions 1090-1100 (SNSRSSKSSRS) are enriched in low complexity. Basic and acidic residues-rich tracts occupy residues 1104-1119 (RFRETDSRLPLCERVK) and 1156-1183 (KDRDKTWEYEEKDRRGSGDHRRSFDSRR). Basic residues predominate over residues 1212–1223 (KLKKKEKQKKRK). 5 HEAT repeats span residues 1803 to 1841 (AQSFDIYLTQILRVLGESAIAVRTKAMKCLSEVVAVDPS), 1879 to 1917 (PQLTEQYYDMLIERILDTGISVRKRVIKILRDICLEQPT), 1981 to 2020 (YDWFEQLLQNLLKSEEDASYKPARKACAQLVDSLVEHILK), 2203 to 2241 (VVIKDKVLELLLYFTKNDDEEVQTKAIIGLGFLFIQDPG), and 2349 to 2387 (LIHPVQCVPYLIAMGTDSEPTMRNKADQQLVEIDKKYTG). Disordered regions lie at residues 2516–2590 (EVVK…DSDL) and 2728–2774 (ALLG…GHRN). The span at 2519–2537 (KKKKKKKKKKKQKQKRGKK) shows a compositional bias: basic residues. Positions 2548 to 2563 (RSSSSSSSSSSSSSDS) are enriched in low complexity. Positions 2762–2774 (RTGDSAEASGHRN) are enriched in basic and acidic residues.

This sequence belongs to the SCC2/Nipped-B family.

The protein localises to the nucleus. Its function is as follows. May play a structural role in chromatin. Involved in sister chromatid cohesion, possibly by facilitating the cohesin complex loading. Transcription factor, which may promote cortical neuron migration during brain development by regulating the transcription of crucial genes in this process. The sequence is that of Nipped-B-like protein B (nipblb) from Danio rerio (Zebrafish).